We begin with the raw amino-acid sequence, 95 residues long: MNLRPLQDRILVKRIEEETKTAGGIFIPDTAKEKPQRGEIVAVGNGKKTEDGKVIPVDLKVGDKVLFGKYAGTDIKIEGQEFLIMREDDILGVIE.

The protein belongs to the GroES chaperonin family. As to quaternary structure, heptamer of 7 subunits arranged in a ring. Interacts with the chaperonin GroEL.

Its subcellular location is the cytoplasm. Its function is as follows. Together with the chaperonin GroEL, plays an essential role in assisting protein folding. The GroEL-GroES system forms a nano-cage that allows encapsulation of the non-native substrate proteins and provides a physical environment optimized to promote and accelerate protein folding. GroES binds to the apical surface of the GroEL ring, thereby capping the opening of the GroEL channel. The protein is Co-chaperonin GroES of Geobacter sulfurreducens (strain ATCC 51573 / DSM 12127 / PCA).